Consider the following 139-residue polypeptide: Large ribosomal subunit protein uL16 (139 aa).

The span at 1-16 shows a compositional bias: basic residues; that stretch reads MLIPKRTKYRKQHRPV. The interval 1 to 22 is disordered; sequence MLIPKRTKYRKQHRPVRSGMSK.

The protein belongs to the universal ribosomal protein uL16 family. As to quaternary structure, part of the 50S ribosomal subunit.

Its function is as follows. Binds 23S rRNA and is also seen to make contacts with the A and possibly P site tRNAs. The protein is Large ribosomal subunit protein uL16 of Bifidobacterium longum (strain DJO10A).